The primary structure comprises 510 residues: Holliday junction branch migration ATPase PINA (510 aa).

As to quaternary structure, homohexamer. Interacts with Holliday junction resolvase Hjc, interacts with helicase Hjm (Hel308).

It carries out the reaction ATP + H2O = ADP + phosphate + H(+). In terms of biological role, important for growth at low temperatures (less than 65 degrees Celsius in this organism). Promotes Holliday junction (HJ) branch migration and unwinds Y-shaped DNA (but not replication forks or dsDNA) in an ATP hydrolysis-dependent manner. Stimulates cleavage by HJ resolvase Hjc. Hjc, Hjm (Hel308) and PINA coordinate HJ migration and cleavage of replication forks in a coordinated way. Probably acts as an ATP-dependent pump that pulls DNA through the hexamer. This is Holliday junction branch migration ATPase PINA from Sulfolobus acidocaldarius (strain ATCC 33909 / DSM 639 / JCM 8929 / NBRC 15157 / NCIMB 11770).